The chain runs to 421 residues: UDP-N-acetylglucosamine 1-carboxyvinyltransferase 2 (421 aa).

22-23 (KN) provides a ligand contact to phosphoenolpyruvate. Arg94 is a binding site for UDP-N-acetyl-alpha-D-glucosamine. The active-site Proton donor is the Cys118. Residue Cys118 is modified to 2-(S-cysteinyl)pyruvic acid O-phosphothioketal. Positions 308 and 330 each coordinate UDP-N-acetyl-alpha-D-glucosamine.

It belongs to the EPSP synthase family. MurA subfamily.

Its subcellular location is the cytoplasm. The enzyme catalyses phosphoenolpyruvate + UDP-N-acetyl-alpha-D-glucosamine = UDP-N-acetyl-3-O-(1-carboxyvinyl)-alpha-D-glucosamine + phosphate. It functions in the pathway cell wall biogenesis; peptidoglycan biosynthesis. In terms of biological role, cell wall formation. Adds enolpyruvyl to UDP-N-acetylglucosamine. The protein is UDP-N-acetylglucosamine 1-carboxyvinyltransferase 2 of Lactococcus lactis subsp. lactis (strain IL1403) (Streptococcus lactis).